The primary structure comprises 292 residues: Glycine-rich RNA-binding protein RZ1B (292 aa).

In terms of domain architecture, RRM spans 12-90 (SRIFVGGLSW…KVISVNKAEP (79 aa)). The residue at position 20 (S20) is a Phosphoserine. Residues 93-114 (GGEDVDQLKKGGGYSSRGKGTE) form a disordered region. The CCHC-type zinc-finger motif lies at 117–132 (CFKCRRPGHWARDCPS). Basic and acidic residues-rich tracts occupy residues 180–210 (DGRRDRDGGRYSYRDRFDSGDKYEPRDHYPF) and 220–268 (FVSD…EGRP). Positions 180–292 (DGRRDRDGGR…GGRPSSYERW (113 aa)) are disordered.

In terms of tissue distribution, expressed in roots, rosette and cauline leaves, stems, floral buds and flowers.

Its subcellular location is the nucleus. Binds RNA and DNA sequences non-specifically. May be involved in tolerance to cold stress. The sequence is that of Glycine-rich RNA-binding protein RZ1B from Arabidopsis thaliana (Mouse-ear cress).